The chain runs to 271 residues: MKFSKIACATVFALSSQAAIIHHAPEFNMKRDVAPAAPAAPADQAPTVPAPQEFNTAITKRSIIGIIMGILGNIPQVIQIIMSIVKAFKGNKREDIDSVVAGIIADMPFVVRAVDTAMTSVASTKRDGANDDVANAVVRLPEIVARVATGVQQSIENAKRDGVPDVGLNLVANAPRLISNVFDGVSETVQQAKRDGLEDFLDELLQRLPQLITRSAESALKDSQPVKRDAGSVALSNLIKKSIETVGIENAAQIVSERDISSLIEEYFGKA.

An N-terminal signal peptide occupies residues 1 to 18 (MKFSKIACATVFALSSQA). A helical transmembrane segment spans residues 62 to 82 (SIIGIIMGILGNIPQVIQIIM).

In terms of assembly, polymerizes in solution to form membrane pores. In terms of processing, cleavage by KEX2 generates 8 peptides ECE1-I to ECE1-VIII, all terminating in Lys-Arg. Only peptide ECE1-III, called candidalysin, shows toxin activity.

Its subcellular location is the secreted. It is found in the host cell membrane. In terms of biological role, secreted protein cleaved by KEX2 in 8 similar peptides (ECE1-I to ECE1-VIII). Stimulates biofilm formation. Its function is as follows. Acts as a cytolytic peptide toxin that directly damages host epithelial membranes, triggers a danger response signaling pathway and activates epithelial immunity. Polymerizes in solution to form membrane pores to damage epithelial cells. Induces calcium influx, oxidative stress, mitochondrial dysfunction and ATP depletion in host cells, leading to epithelial necrosis. Serves as a danger signal that potentiates the immune response, and more specifically IL-17 response. Induces cytokine/chemokine secretion by host (especially CCL2/3/4, CXCL1 and S100A8), neutrophil recruitment, and promotes mortality in zebrafish and murine models of systemic fungal infection. Mediates distinct epithelial inflammatory responses through p38, EGFR-ERK and TREM-1/DAP12 pathways. Acts as one of the hypha-derived drivers of NLRP3 inflammasome responses in primary macrophages and thus contributes to the capacity to induce maturation and secretion of IL-1beta from primary macrophages. Stimulates mast cells by mediating cross-talk between signaling pathways activated by the dectin-1 receptor and MAPKs. Enables escape via the gasdermin-mediated pyroptosis, as well as a cell lysis pathway associated with macrophage extracellular trap formation termed ETosis. Acts as the main hemolytic factor of C.albicans. As an exotoxine, also promotes alcohol-associated liver disease or oral carcinogenesis. The sequence is that of Extent of cell elongation protein 1 from Candida albicans (strain SC5314 / ATCC MYA-2876) (Yeast).